A 117-amino-acid polypeptide reads, in one-letter code: Large ribosomal subunit protein bL20 (117 aa).

This sequence belongs to the bacterial ribosomal protein bL20 family.

Its function is as follows. Binds directly to 23S ribosomal RNA and is necessary for the in vitro assembly process of the 50S ribosomal subunit. It is not involved in the protein synthesizing functions of that subunit. This Mannheimia succiniciproducens (strain KCTC 0769BP / MBEL55E) protein is Large ribosomal subunit protein bL20.